A 257-amino-acid chain; its full sequence is Hydroxyethylthiazole kinase 1 (257 aa).

A substrate-binding site is contributed by methionine 41. The ATP site is built by lysine 117 and threonine 162. Glycine 189 provides a ligand contact to substrate.

Belongs to the Thz kinase family. It depends on Mg(2+) as a cofactor.

The catalysed reaction is 5-(2-hydroxyethyl)-4-methylthiazole + ATP = 4-methyl-5-(2-phosphooxyethyl)-thiazole + ADP + H(+). Its pathway is cofactor biosynthesis; thiamine diphosphate biosynthesis; 4-methyl-5-(2-phosphoethyl)-thiazole from 5-(2-hydroxyethyl)-4-methylthiazole: step 1/1. Its function is as follows. Catalyzes the phosphorylation of the hydroxyl group of 4-methyl-5-beta-hydroxyethylthiazole (THZ). In Oceanobacillus iheyensis (strain DSM 14371 / CIP 107618 / JCM 11309 / KCTC 3954 / HTE831), this protein is Hydroxyethylthiazole kinase 1.